A 353-amino-acid chain; its full sequence is Photosystem II D2 protein (353 aa).

A helical membrane pass occupies residues 41–61 (TAYLALGGWLTGTTFVTSWYT). H118 is a binding site for chlorophyll a. The helical transmembrane segment at 125–141 (GFMLRQFEISRLVGIRP) threads the bilayer. 2 residues coordinate pheophytin a: Q130 and N143. Residues 153-166 (VFVSVFLMYPLGQS) traverse the membrane as a helical segment. Chlorophyll a is bound at residue H198. The chain crosses the membrane as a helical span at residues 208-228 (GALLCAIHGATVENTLYEDGE). H215 and F262 together coordinate a plastoquinone. H215 is a Fe cation binding site. Fe cation is bound at residue H269. A helical membrane pass occupies residues 279–295 (GLWTSSIGIIGLALNLR).

The protein belongs to the reaction center PufL/M/PsbA/D family. As to quaternary structure, PSII is composed of 1 copy each of membrane proteins PsbA, PsbB, PsbC, PsbD, PsbE, PsbF, PsbH, PsbI, PsbJ, PsbK, PsbL, PsbM, PsbT, PsbX, PsbY, PsbZ, Psb30/Ycf12, peripheral proteins PsbO, CyanoQ (PsbQ), PsbU, PsbV and a large number of cofactors. It forms dimeric complexes. It depends on The D1/D2 heterodimer binds P680, chlorophylls that are the primary electron donor of PSII, and subsequent electron acceptors. It shares a non-heme iron and each subunit binds pheophytin, quinone, additional chlorophylls, carotenoids and lipids. There is also a Cl(-1) ion associated with D1 and D2, which is required for oxygen evolution. The PSII complex binds additional chlorophylls, carotenoids and specific lipids. as a cofactor.

It localises to the host cellular thylakoid membrane. The catalysed reaction is 2 a plastoquinone + 4 hnu + 2 H2O = 2 a plastoquinol + O2. Functionally, photosystem II (PSII) is a light-driven water:plastoquinone oxidoreductase that uses light energy to abstract electrons from H(2)O, generating O(2) and a proton gradient subsequently used for ATP formation. It consists of a core antenna complex that captures photons, and an electron transfer chain that converts photonic excitation into a charge separation. The D1/D2 (PsbA/PsbD) reaction center heterodimer binds P680, the primary electron donor of PSII as well as several subsequent electron acceptors. D2 is needed for assembly of a stable PSII complex. The protein is Photosystem II D2 protein (psbD) of Synechococcus phage S-PM2.